The primary structure comprises 230 residues: Claudin-2 (230 aa).

The Cytoplasmic segment spans residues 1–7 (MASLGVQ). The helical transmembrane segment at 8 to 28 (LVGYILGLLGLLGTSIAMLLP) threads the bilayer. Residues 29 to 81 (NWRTSSYVGASIVTAVGFSKGLWMECATHSTGITQCDIYSTLLGLPADIQAAQ) lie on the Extracellular side of the membrane. C54 and C64 are joined by a disulfide. A helical transmembrane segment spans residues 82 to 102 (AMMVTSSAMSSLACIISVVGM). Residues 103 to 116 (RCTVFCQDSRAKDR) are Cytoplasmic-facing. The chain crosses the membrane as a helical span at residues 117–137 (VAVVGGVFFILGGILGFIPVA). The Extracellular segment spans residues 138–162 (WNLHGILRDFYSPLVPDSMKFEIGE). A helical transmembrane segment spans residues 163-183 (ALYLGIISALFSLVAGVILCF). At 184 to 230 (SCSPQGNRTNYYDGYQAQPLATRSSPRSAQQPKAKSEFNSYSLTGYV) the chain is on the cytoplasmic side. Residues 205-230 (TRSSPRSAQQPKAKSEFNSYSLTGYV) form a disordered region. K218 participates in a covalent cross-link: Glycyl lysine isopeptide (Lys-Gly) (interchain with G-Cter in SUMO). A phosphoserine mark is found at S219 and S223. Positions 229–230 (YV) are interactions with TJP1, TJP2 and TJP3.

It belongs to the claudin family. As to quaternary structure, can form homo- and heteropolymers with other claudins to mediate paracellular barrier and channel functions of tight junctions in response to physiological stimuli. Homopolymers interact with CLDN3, but not CLDN1, homopolymers. Directly interacts with TJP1/ZO-1, TJP2/ZO-2 and TJP3/ZO-3. Post-translationally, the disulfide bond is necessary for pore formation, but is not required for correct protein trafficking. As to expression, expressed in the kidney, liver and intestine, with higher levels in the ileum than in the jejunum. Low levels in the brain. Expressed in colonic epithelium (at protein level). Expressed in the perivenous regions, bile ducts, and gallbladder epithelium (at protein level).

It localises to the cell junction. The protein localises to the tight junction. It is found in the cell membrane. It carries out the reaction Na(+)(in) = Na(+)(out). The catalysed reaction is K(+)(in) = K(+)(out). It catalyses the reaction Rb(+)(in) = Rb(+)(out). The enzyme catalyses Li(+)(in) = Li(+)(out). It carries out the reaction Cs(+)(in) = Cs(+)(out). The catalysed reaction is Ca(2+)(in) = Ca(2+)(out). It catalyses the reaction methylamine(out) = methylamine(in). The enzyme catalyses choline(out) = choline(in). It carries out the reaction H2O(in) = H2O(out). Its activity is regulated as follows. The channel permeability is down-regulated at acidic pH. In terms of biological role, forms paracellular channels: polymerizes in tight junction strands with cation- and water-selective channels through the strands, conveying epithelial permeability in a process known as paracellular tight junction permeability. In intestinal epithelium, allows for sodium and water fluxes from the peritoneal side to the lumen of the intestine to regulate nutrient absorption and clear enteric pathogens as part of mucosal immune response. In kidney, allows passive sodium and calcium reabsorption across proximal tubules from the lumen back to the bloodstream. In the hepatobiliary tract, allows paracellular water and cation fluxes in the hepatic perivenous areas and biliary epithelium to generate bile flow and maintain osmotic gradients. In Mus musculus (Mouse), this protein is Claudin-2.